The chain runs to 452 residues: Nebulette (452 aa).

The tract at residues 1 to 26 (MKVPVSGDVKEETEEENVEQEENQEA) is disordered. Positions 11-23 (EETEEENVEQEEN) are enriched in acidic residues. 12 Nebulin repeats span residues 29 to 63 (SLKPVIEDLSMELARKCTELISDIHYKEEYKKSKD), 64 to 98 (KCTFVTDTPMLNHVKNIGAFISEAKYKGTIKADLS), 101 to 135 (LYKDMPATIDSVFAREVSQLQSEVAYKQKHEAEKG), 138 to 172 (DYTHMKEPPEVRRAMEVNRHQSNISYRKDMQGTHT), 173 to 199 (YTAELDRPDIKKATQISKIISDAEYKK), 206 to 240 (KEPSVIGRPDFEHAVGASKLSSQVKYKEKFDNEMK), 263 to 278 (LASDWEYKRDFEENKG), 279 to 313 (LYHFDAEAPEHLHHKGNATLQSQVKYREEYEKNKG), 315 to 349 (SMLEFVETPSYQSSKEAQKMQSEKVYKEDFEKEIK), 352 to 386 (SSLDLDKTPAFLHVKHITNLMREKEYKKDLENEIK), 389 to 423 (GMELSSEVLDIQRAKRASEMASEKDYKRDLETEIK), and 426 to 452 (GMQVSTDTLDVQRAKRASEMASQVRMV).

In terms of assembly, interacts (via nebulin repeats 1-5) with DESM (via rod region). Interacts (via SH3 domain) with XIRP2.

Its subcellular location is the cytoplasm. Its function is as follows. Binds to actin and plays an important role in the assembly of the Z-disk. May functionally link sarcomeric actin to the desmin intermediate filaments in the heart muscle sarcomeres. Isoform 2 might play a role in the assembly of focal adhesion. The polypeptide is Nebulette (Nebl) (Mus musculus (Mouse)).